The primary structure comprises 523 residues: MSWSRHKSLQRIRSFRASAPAAAINLSNFDLSYMTARATTIQARRKAGGKSEPLIFDVPPDSAVLVEGVHVYIQLLDFASAMTERERETEASHRRVLSMLHLNYAACDQVAEEFEAQRVDFHGARMHAVIVSPPGPGNERDRAERALAFADAAKRAIEEVGRTTENGRYSTRVRVGIDSGSAVAVNSGTQDEREPLFLGAPANYAAKLAEGDEEGVFMSNRIRKDLGLPQLSSFDTLAAERASRTSSVGETGLSANTSFQSKRLSDAAIMTAASRARNSFILNVGTDANFSFHRHTPPLSTIDFALLTPSNSVRMGLMSIFGDIDGFTKYVDECIAAQRIGEMVSNLHVIRSELAATLSQDFLGRKVRFIGDCIHGLLATGTSYETDASGSVVASVKAAGGMRSSFELCQEELGGIENLGIAIGLEYGETPITRIGIRGDRSVRCSVSRAVSRSEELQGGCTGDQTALGPTALGHAPTSIRRLFAGGVAMGLDAGSVDEHLGSPPIVRSGEVSAAAAPYDSGE.

Guanylate cyclase domains follow at residues 69-209 and 318-438; these read VHVY…AKLA and MSIF…IGIR. Residues Tyr72 and Arg125 each coordinate a ribonucleoside 5'-triphosphate. Mn(2+)-binding residues include Asp323, Ile324, and Asp372.

The protein belongs to the adenylyl cyclase class-4/guanylyl cyclase family. Pyrimidine cyclase subfamily. As to quaternary structure, monomer. Mn(2+) serves as cofactor.

Its subcellular location is the cytoplasm. It catalyses the reaction UTP = 3',5'-cyclic UMP + diphosphate. Functionally, pycsar (pyrimidine cyclase system for antiphage resistance) provides immunity against bacteriophage. The pyrimidine cyclase (PycC) synthesizes cyclic nucleotides in response to infection; these serve as specific second messenger signals. The signals activate the nearby effector, leading to bacterial cell death and abortive phage infection. A clade A Pycsar system. In terms of biological role, the pyrimidine cyclase gene of a two-gene Pycsar system, generates cyclic UMP (cUMP) from UTP, has little to no activity on ATP, CTP or GTP. Expression of this and effector RsPycTM (AC A0A4R2UGS4) probably confers resistance to some bacteriophage. The genes are probably only expressed in response to bacteriophage infection. In Rhizobium sp. (strain PP-F2F-G36), this protein is Uridylate cyclase.